We begin with the raw amino-acid sequence, 147 residues long: Protein archease (147 aa).

Residues D17, D146, and I147 each coordinate Ca(2+).

It belongs to the archease family.

Its function is as follows. Activates the tRNA-splicing ligase complex by facilitating the enzymatic turnover of catalytic subunit RtcB. Acts by promoting the guanylylation of RtcB, a key intermediate step in tRNA ligation. Can also alter the NTP specificity of RtcB such that ATP, dGTP or ITP is used efficiently. This chain is Protein archease, found in Pyrobaculum calidifontis (strain DSM 21063 / JCM 11548 / VA1).